We begin with the raw amino-acid sequence, 201 residues long: Small ribosomal subunit protein uS4 (201 aa).

Residues Ser91–Glu151 enclose the S4 RNA-binding domain.

It belongs to the universal ribosomal protein uS4 family. Part of the 30S ribosomal subunit. Contacts protein S5. The interaction surface between S4 and S5 is involved in control of translational fidelity.

In terms of biological role, one of the primary rRNA binding proteins, it binds directly to 16S rRNA where it nucleates assembly of the body of the 30S subunit. Functionally, with S5 and S12 plays an important role in translational accuracy. This is Small ribosomal subunit protein uS4 from Mycolicibacterium gilvum (strain PYR-GCK) (Mycobacterium gilvum (strain PYR-GCK)).